We begin with the raw amino-acid sequence, 130 residues long: Methylglyoxal synthase (130 aa).

Positions 1–130 constitute an MGS-like domain; it reads MSKPRIALIA…DLARNMQDVC (130 aa). Residues His-11, Lys-15, 37-40, and 57-58 contribute to the substrate site; these read TGTT and SG. Asp-63 acts as the Proton donor/acceptor in catalysis. His-90 is a binding site for substrate.

This sequence belongs to the methylglyoxal synthase family.

The catalysed reaction is dihydroxyacetone phosphate = methylglyoxal + phosphate. Catalyzes the formation of methylglyoxal from dihydroxyacetone phosphate. The chain is Methylglyoxal synthase from Burkholderia ambifaria (strain MC40-6).